The following is a 54-amino-acid chain: UPF0391 membrane protein BAV1230 (54 aa).

2 helical membrane-spanning segments follow: residues 5–25 and 27–47; these read AAVF…GIAA and AAGI…LSVL.

Belongs to the UPF0391 family.

The protein resides in the cell membrane. In Bordetella avium (strain 197N), this protein is UPF0391 membrane protein BAV1230.